The sequence spans 261 residues: 4-phosphopantoate--beta-alanine ligase (261 aa).

Residues Arg17, Arg39, 181–182, 187–188, and 199–200 contribute to the ATP site; these read DL, RS, and NI.

Belongs to the archaeal phosphopantothenate synthetase family. In terms of assembly, homodimer.

The enzyme catalyses (R)-4-phosphopantoate + beta-alanine + ATP = (R)-4'-phosphopantothenate + AMP + diphosphate + H(+). Its pathway is cofactor biosynthesis; coenzyme A biosynthesis. Catalyzes the condensation of (R)-4-phosphopantoate and beta-alanine to 4'-phosphopantothenate in the CoA biosynthesis pathway. The polypeptide is 4-phosphopantoate--beta-alanine ligase (Thermococcus onnurineus (strain NA1)).